The chain runs to 228 residues: Urease accessory protein UreF (228 aa).

The protein belongs to the UreF family. As to quaternary structure, ureD, UreF and UreG form a complex that acts as a GTP-hydrolysis-dependent molecular chaperone, activating the urease apoprotein by helping to assemble the nickel containing metallocenter of UreC. The UreE protein probably delivers the nickel.

Its subcellular location is the cytoplasm. Its function is as follows. Required for maturation of urease via the functional incorporation of the urease nickel metallocenter. The polypeptide is Urease accessory protein UreF (Prochlorococcus marinus (strain MIT 9301)).